Here is a 214-residue protein sequence, read N- to C-terminus: Peptidyl-tRNA hydrolase (214 aa).

Tyr14 is a binding site for tRNA. The active-site Proton acceptor is the His19. Residues Tyr64, Asn66, and Asn113 each coordinate tRNA. The disordered stretch occupies residues 184-214 (RINAPPPKPEKKRGSETSDPSAESADHAGGG).

This sequence belongs to the PTH family. Monomer.

It localises to the cytoplasm. The catalysed reaction is an N-acyl-L-alpha-aminoacyl-tRNA + H2O = an N-acyl-L-amino acid + a tRNA + H(+). Functionally, hydrolyzes ribosome-free peptidyl-tRNAs (with 1 or more amino acids incorporated), which drop off the ribosome during protein synthesis, or as a result of ribosome stalling. Catalyzes the release of premature peptidyl moieties from peptidyl-tRNA molecules trapped in stalled 50S ribosomal subunits, and thus maintains levels of free tRNAs and 50S ribosomes. The protein is Peptidyl-tRNA hydrolase of Roseiflexus castenholzii (strain DSM 13941 / HLO8).